A 119-amino-acid chain; its full sequence is Large ribosomal subunit protein bL20 (119 aa).

The protein belongs to the bacterial ribosomal protein bL20 family.

In terms of biological role, binds directly to 23S ribosomal RNA and is necessary for the in vitro assembly process of the 50S ribosomal subunit. It is not involved in the protein synthesizing functions of that subunit. This chain is Large ribosomal subunit protein bL20, found in Polaromonas sp. (strain JS666 / ATCC BAA-500).